A 48-amino-acid polypeptide reads, in one-letter code: Fimbrial assembly protein, serogroup F1 (48 aa).

The chain is Fimbrial assembly protein, serogroup F1 (fimB) from Dichelobacter nodosus (Bacteroides nodosus).